The sequence spans 140 residues: Cytochrome c-type biogenesis protein CcmE (140 aa).

The Cytoplasmic segment spans residues 1–7 (MKRKHKR). A helical; Signal-anchor for type II membrane protein membrane pass occupies residues 8–28 (LLFVLASFCAAGCALLFILSE). Residues 29–140 (LRESVSFFYT…TIPKALPEPK (112 aa)) are Periplasmic-facing. The heme site is built by His-121 and Tyr-125.

It belongs to the CcmE/CycJ family.

The protein localises to the cell inner membrane. Its function is as follows. Heme chaperone required for the biogenesis of c-type cytochromes. Transiently binds heme delivered by CcmC and transfers the heme to apo-cytochromes in a process facilitated by CcmF and CcmH. In Anaplasma marginale (strain Florida), this protein is Cytochrome c-type biogenesis protein CcmE.